A 188-amino-acid polypeptide reads, in one-letter code: Holliday junction branch migration complex subunit RuvA (188 aa).

The interval 1 to 63 (MIEIIEGIYK…QEDMTIYGFD (63 aa)) is domain I. The tract at residues 64 to 142 (SKVKKETFEK…VVEVNEEMLE (79 aa)) is domain II. Glu-142 is a region of interest (flexible linker). The tract at residues 142–188 (EAIEALVSLGYSKTQARNAVSKVLKESPNISNVSKIIKEALKILAKI) is domain III.

It belongs to the RuvA family. As to quaternary structure, homotetramer. Forms an RuvA(8)-RuvB(12)-Holliday junction (HJ) complex. HJ DNA is sandwiched between 2 RuvA tetramers; dsDNA enters through RuvA and exits via RuvB. An RuvB hexamer assembles on each DNA strand where it exits the tetramer. Each RuvB hexamer is contacted by two RuvA subunits (via domain III) on 2 adjacent RuvB subunits; this complex drives branch migration. In the full resolvosome a probable DNA-RuvA(4)-RuvB(12)-RuvC(2) complex forms which resolves the HJ.

It is found in the cytoplasm. The RuvA-RuvB-RuvC complex processes Holliday junction (HJ) DNA during genetic recombination and DNA repair, while the RuvA-RuvB complex plays an important role in the rescue of blocked DNA replication forks via replication fork reversal (RFR). RuvA specifically binds to HJ cruciform DNA, conferring on it an open structure. The RuvB hexamer acts as an ATP-dependent pump, pulling dsDNA into and through the RuvAB complex. HJ branch migration allows RuvC to scan DNA until it finds its consensus sequence, where it cleaves and resolves the cruciform DNA. The sequence is that of Holliday junction branch migration complex subunit RuvA from Fervidobacterium nodosum (strain ATCC 35602 / DSM 5306 / Rt17-B1).